The primary structure comprises 516 residues: MWALRAAVRPGLRLSRVGRGRSAPRAAAPSCPARALAAVGRRSPGNLEGPWGGGRGLRADGGRSRTGDDEEEPEDADENAEEELLRGEPLLPAGTQRVCLVHPDVKWGPGKSQMTRAEWQVAEATALVHTLDGWSVVQTMVVSTKTPDRKLIFGKGNFEHLTEKIRGSPDITCVFLNVERMAAPTKKELEAAWGVEVFDRFTVVLHIFRCNARTKEARLQVALAEMPLHRSNLKRDVAHLYRGVGSRYIMGSGESFMQLQQRLLREKEAKIRKALDRLRKKRHLLRRQRTRREFPVISVVGYTNCGKTTLIKALTGDAAIQPRDQLFATLDVTAHAGTLPSRMTVLYVDTIGFLSQLPHGLIESFSATLEDVAHSDLILHVRDVSHPEAELQKCSVLSTLRGLQLPAPLLDSMVEVHNKVDLVPGYSPTEPNVVPVSALRGHGLQELKAELDAAVLKATGRQILTLRVRLAGAQLSWLYKEATVQEVDVIPEDGAADVRVIISNSAYGKFRKLFPG.

Low complexity predominate over residues G18–V39. The disordered stretch occupies residues G18 to E82. A compositionally biased stretch (basic and acidic residues) spans L57–G67. Residues D68–E82 are compositionally biased toward acidic residues. A Hflx-type G domain is found at P295–T459. Residues G301–T308, F327–D331, D349–G352, N418–D421, and S437–L439 each bind GTP. Residues T308 and T329 each coordinate Mg(2+).

The protein belongs to the TRAFAC class OBG-HflX-like GTPase superfamily. HflX GTPase family. Requires Mg(2+) as cofactor. As to expression, ubiquitously expressed.

The protein is Putative GTP-binding protein 6 (GTPBP6) of Homo sapiens (Human).